Consider the following 603-residue polypeptide: Arginine--tRNA ligase (603 aa).

A 'HIGH' region motif is present at residues 143-153; that stretch reads PNIAKEMHVGH.

This sequence belongs to the class-I aminoacyl-tRNA synthetase family. In terms of assembly, monomer.

Its subcellular location is the cytoplasm. It catalyses the reaction tRNA(Arg) + L-arginine + ATP = L-arginyl-tRNA(Arg) + AMP + diphosphate. The polypeptide is Arginine--tRNA ligase (Prochlorococcus marinus (strain MIT 9303)).